A 66-amino-acid chain; its full sequence is Nigrocin-2ISb (66 aa).

Positions 1-22 (MFTLKKSMLLLFFLGTINLSLC) are cleaved as a signal peptide. Residues 23-43 (QEERDAEEERRDEDNAKMEEI) constitute a propeptide, removed in mature form. A disulfide bond links Cys60 and Cys66.

Expressed by the skin glands.

It localises to the secreted. Its function is as follows. Has antimicrobial activity against Gram-negative bacterium E.coli ATCC 8739 (MIC=50 ug), against Gram positive bacteria S.aureus ATCC 6538 (MIC=3.1 ug), methicillin-resistant S.aureus ATCC 43300 (MIC=12.5 ug), B.subtilis ATCC 6633 (MIC=12.5 ug) and against fungus C.albicans ATCC 90028 (MIC=50 ug). This is Nigrocin-2ISb from Odorrana ishikawae (Ishikawa's frog).